The chain runs to 122 residues: Small ribosomal subunit protein uS13 (122 aa).

A disordered region spans residues 99–122; the sequence is RGQRTHTNARTRKGPAKAIAGKKK.

The protein belongs to the universal ribosomal protein uS13 family. Part of the 30S ribosomal subunit. Forms a loose heterodimer with protein S19. Forms two bridges to the 50S subunit in the 70S ribosome.

Functionally, located at the top of the head of the 30S subunit, it contacts several helices of the 16S rRNA. In the 70S ribosome it contacts the 23S rRNA (bridge B1a) and protein L5 of the 50S subunit (bridge B1b), connecting the 2 subunits; these bridges are implicated in subunit movement. Contacts the tRNAs in the A and P-sites. The protein is Small ribosomal subunit protein uS13 of Rhizobium etli (strain ATCC 51251 / DSM 11541 / JCM 21823 / NBRC 15573 / CFN 42).